A 413-amino-acid chain; its full sequence is Probable tRNA sulfurtransferase (413 aa).

The region spanning 61 to 171 (TRVLDRVTRV…EDGTYIFTEK (111 aa)) is the THUMP domain. Residues 189–190 (ML), 214–215 (HF), R275, G297, and Q306 each bind ATP.

The protein belongs to the ThiI family.

It localises to the cytoplasm. The catalysed reaction is [ThiI sulfur-carrier protein]-S-sulfanyl-L-cysteine + a uridine in tRNA + 2 reduced [2Fe-2S]-[ferredoxin] + ATP + H(+) = [ThiI sulfur-carrier protein]-L-cysteine + a 4-thiouridine in tRNA + 2 oxidized [2Fe-2S]-[ferredoxin] + AMP + diphosphate. It carries out the reaction [ThiS sulfur-carrier protein]-C-terminal Gly-Gly-AMP + S-sulfanyl-L-cysteinyl-[cysteine desulfurase] + AH2 = [ThiS sulfur-carrier protein]-C-terminal-Gly-aminoethanethioate + L-cysteinyl-[cysteine desulfurase] + A + AMP + 2 H(+). It functions in the pathway cofactor biosynthesis; thiamine diphosphate biosynthesis. In terms of biological role, catalyzes the ATP-dependent transfer of a sulfur to tRNA to produce 4-thiouridine in position 8 of tRNAs, which functions as a near-UV photosensor. Also catalyzes the transfer of sulfur to the sulfur carrier protein ThiS, forming ThiS-thiocarboxylate. This is a step in the synthesis of thiazole, in the thiamine biosynthesis pathway. The sulfur is donated as persulfide by IscS. This Natranaerobius thermophilus (strain ATCC BAA-1301 / DSM 18059 / JW/NM-WN-LF) protein is Probable tRNA sulfurtransferase.